A 428-amino-acid polypeptide reads, in one-letter code: BTB/POZ domain-containing protein KCTD16 (428 aa).

The 74-residue stretch at 25-98 folds into the BTB domain; it reads EVVELNVGGQ…LRDRQVVLPD (74 aa). The residue at position 112 (Tyr112) is a Phosphotyrosine. Residues Ser130, Ser137, Ser143, and Ser146 each carry the phosphoserine modification.

As to quaternary structure, homopentamer; forms an open pentamer. In contrast to other BTB domain-containing proteins, does not interact with CUL3. Interacts as a tetramer with GABRB1 and GABRB2.

It localises to the presynaptic cell membrane. Its subcellular location is the postsynaptic cell membrane. Functionally, auxiliary subunit of GABA-B receptors that determine the pharmacology and kinetics of the receptor response. Increases agonist potency and markedly alter the G-protein signaling of the receptors by accelerating onset and promoting desensitization. This chain is BTB/POZ domain-containing protein KCTD16 (KCTD16), found in Homo sapiens (Human).